Consider the following 95-residue polypeptide: Aspartyl/glutamyl-tRNA(Asn/Gln) amidotransferase subunit C (95 aa).

Belongs to the GatC family. As to quaternary structure, heterotrimer of A, B and C subunits.

The catalysed reaction is L-glutamyl-tRNA(Gln) + L-glutamine + ATP + H2O = L-glutaminyl-tRNA(Gln) + L-glutamate + ADP + phosphate + H(+). The enzyme catalyses L-aspartyl-tRNA(Asn) + L-glutamine + ATP + H2O = L-asparaginyl-tRNA(Asn) + L-glutamate + ADP + phosphate + 2 H(+). Its function is as follows. Allows the formation of correctly charged Asn-tRNA(Asn) or Gln-tRNA(Gln) through the transamidation of misacylated Asp-tRNA(Asn) or Glu-tRNA(Gln) in organisms which lack either or both of asparaginyl-tRNA or glutaminyl-tRNA synthetases. The reaction takes place in the presence of glutamine and ATP through an activated phospho-Asp-tRNA(Asn) or phospho-Glu-tRNA(Gln). The protein is Aspartyl/glutamyl-tRNA(Asn/Gln) amidotransferase subunit C of Prochlorococcus marinus (strain NATL1A).